The primary structure comprises 266 residues: 4-hydroxy-tetrahydrodipicolinate reductase (266 aa).

Residues 8–13 (GAAGRM) and E33 contribute to the NAD(+) site. R34 provides a ligand contact to NADP(+). NAD(+)-binding positions include 97-99 (GST) and 121-124 (APNM). H154 functions as the Proton donor/acceptor in the catalytic mechanism. H155 serves as a coordination point for (S)-2,3,4,5-tetrahydrodipicolinate. Residue K158 is the Proton donor of the active site. 164-165 (GT) lines the (S)-2,3,4,5-tetrahydrodipicolinate pocket.

This sequence belongs to the DapB family.

It localises to the cytoplasm. It catalyses the reaction (S)-2,3,4,5-tetrahydrodipicolinate + NAD(+) + H2O = (2S,4S)-4-hydroxy-2,3,4,5-tetrahydrodipicolinate + NADH + H(+). The enzyme catalyses (S)-2,3,4,5-tetrahydrodipicolinate + NADP(+) + H2O = (2S,4S)-4-hydroxy-2,3,4,5-tetrahydrodipicolinate + NADPH + H(+). Its pathway is amino-acid biosynthesis; L-lysine biosynthesis via DAP pathway; (S)-tetrahydrodipicolinate from L-aspartate: step 4/4. Its function is as follows. Catalyzes the conversion of 4-hydroxy-tetrahydrodipicolinate (HTPA) to tetrahydrodipicolinate. This Trichlorobacter lovleyi (strain ATCC BAA-1151 / DSM 17278 / SZ) (Geobacter lovleyi) protein is 4-hydroxy-tetrahydrodipicolinate reductase.